An 812-amino-acid chain; its full sequence is 1,4-alpha-glucan branching enzyme GlgB (812 aa).

The segment covering 1–11 (MNNGDVNNGTA) has biased composition (polar residues). Residues 1–83 (MNNGDVNNGT…SALPADPPAV (83 aa)) are disordered. Positions 49–64 (SSASAQPGQTADDPAV) are enriched in low complexity. Over residues 65 to 83 (PSAPPSAPPSALPADPPAV) the composition is skewed to pro residues. Aspartate 490 acts as the Nucleophile in catalysis. Catalysis depends on glutamate 543, which acts as the Proton donor.

It belongs to the glycosyl hydrolase 13 family. GlgB subfamily. In terms of assembly, monomer.

The enzyme catalyses Transfers a segment of a (1-&gt;4)-alpha-D-glucan chain to a primary hydroxy group in a similar glucan chain.. Its pathway is glycan biosynthesis; glycogen biosynthesis. Its function is as follows. Catalyzes the formation of the alpha-1,6-glucosidic linkages in glycogen by scission of a 1,4-alpha-linked oligosaccharide from growing alpha-1,4-glucan chains and the subsequent attachment of the oligosaccharide to the alpha-1,6 position. This is 1,4-alpha-glucan branching enzyme GlgB from Frankia casuarinae (strain DSM 45818 / CECT 9043 / HFP020203 / CcI3).